The sequence spans 96 residues: Co-chaperonin GroES (96 aa).

The protein belongs to the GroES chaperonin family. As to quaternary structure, heptamer of 7 subunits arranged in a ring. Interacts with the chaperonin GroEL.

It localises to the cytoplasm. Its function is as follows. Together with the chaperonin GroEL, plays an essential role in assisting protein folding. The GroEL-GroES system forms a nano-cage that allows encapsulation of the non-native substrate proteins and provides a physical environment optimized to promote and accelerate protein folding. GroES binds to the apical surface of the GroEL ring, thereby capping the opening of the GroEL channel. This chain is Co-chaperonin GroES, found in Vibrio campbellii (strain ATCC BAA-1116).